Here is a 226-residue protein sequence, read N- to C-terminus: Ribonuclease 3 (226 aa).

In terms of domain architecture, RNase III spans 6 to 128 (TKKIQKVLGY…LIGSIYLDSN (123 aa)). Mg(2+) is bound at residue Glu41. Asp45 is a catalytic residue. Residues Asn114 and Glu117 each contribute to the Mg(2+) site. Glu117 is a catalytic residue. Positions 155–225 (DPKTRLQEYL…AQKALIKLGV (71 aa)) constitute a DRBM domain.

It belongs to the ribonuclease III family. As to quaternary structure, homodimer. Mg(2+) is required as a cofactor.

It is found in the cytoplasm. It carries out the reaction Endonucleolytic cleavage to 5'-phosphomonoester.. Its function is as follows. Digests double-stranded RNA. Involved in the processing of primary rRNA transcript to yield the immediate precursors to the large and small rRNAs (23S and 16S). Processes some mRNAs, and tRNAs when they are encoded in the rRNA operon. Processes pre-crRNA and tracrRNA of type II CRISPR loci if present in the organism. The chain is Ribonuclease 3 from Buchnera aphidicola subsp. Acyrthosiphon pisum (strain 5A).